Here is a 651-residue protein sequence, read N- to C-terminus: Forkhead box protein K2 (651 aa).

Residues 1 to 13 (MAAAAALSGAGAP) are compositionally biased toward low complexity. The disordered stretch occupies residues 1-29 (MAAAAALSGAGAPPAGGGAGGGGSPPGGW). The span at 14–26 (PAGGGAGGGGSPP) shows a compositional bias: gly residues. Ser24 bears the Phosphoserine mark. The FHA domain maps to 48–119 (VTIGRNSSQG…NGVFVDGVFQ (72 aa)). The required for interaction with DVL2 and SUDS3 stretch occupies residues 120–162 (RRGAPPLQLPRVCTFRFPSTNIKITFTALSSEKREKQEAPESP). Arg135 carries the post-translational modification Omega-N-methylarginine. Disordered regions lie at residues 150–171 (SEKR…PHIS) and 194–251 (TISA…SKPP). Residues Lys152 and Lys155 each participate in a glycyl lysine isopeptide (Lys-Gly) (interchain with G-Cter in SUMO2) cross-link. Over residues 194–203 (TISAANSCPS) the composition is skewed to polar residues. The residue at position 230 (Ser230) is a Phosphoserine. Over residues 233 to 249 (ENEKEASGGDSPKDDSK) the composition is skewed to basic and acidic residues. A DNA-binding region (fork-head) is located at residues 249 to 344 (KPPYSYAQLI…EQAFRKRRPR (96 aa)). The tract at residues 291 to 309 (KGWQNSIRHNLSLNRYFIK) is DNA-binding; major groove. Mg(2+) contacts are provided by Leu301, Ser302, Asn304, and Phe307. 2 DNA-binding; minor groove regions span residues 319-323 (KGSFW) and 339-344 (RKRRPR). The disordered stretch occupies residues 350 to 399 (RTPLGPLSSRSAPASPNHAGVLSAHSSGAQTPESLSREGSPAPLEPEPGA). Phosphoserine is present on Ser364. The segment covering 373–383 (AHSSGAQTPES) has biased composition (polar residues). Ser389, Ser415, and Ser419 each carry phosphoserine. Residue Lys518 forms a Glycyl lysine isopeptide (Lys-Gly) (interchain with G-Cter in SUMO2) linkage. Position 590 is a phosphoserine (Ser590). Polar residues predominate over residues 601 to 614 (ASASLPTKRQNGDQ). Positions 601-623 (ASASLPTKRQNGDQAEQPELKRV) are disordered. Lys624 is covalently cross-linked (Glycyl lysine isopeptide (Lys-Gly) (interchain with G-Cter in SUMO2)).

As to quaternary structure, component of SIN3A-, but not SIN3B-, containing multiprotein complexes. Interacts with DVL1, DVL2 (when phosphorylated) and DVL3; the interaction induces DVL2 nuclear translocation. Interacts with SUDS3. Interacts with BAP1 (when phosphorylated); leading to recruit the PR-DUB complex and repress FOXK2 target genes. Accessory component of the polycomb repressive deubiquitinase (PR-DUB) complex, at least composed of BAP1, one of ASXL1, ASXL2 or (probably) ASXL3 and one of MBD5 or MBD6. The PR-DUB core associates with a number of accessory proteins, including FOXK1, FOXK2, KDM1B, HCFC1 and OGT. In terms of processing, hyperphosphorylated during mitosis by CDK1 and, to a lower extent, CDK2. Phosphorylation at Ser-364 and Ser-419 affects stability by promoting degradation. As to expression, expressed in a wide range of adult brain regions, namely the piriform cortex, the major islands of Calleja and cells lining the lateral ventricles, the bed nucleus of stria terminalis, the paraventricular thalamic nucleus, habenula and all structures of the hippocampus. Also present in the hypothalamus, cerebral cortex and in the Purkinje cell layer in the cerebellum. Additionally expressed in dopamine neurons of the substantia and more sparsely in the ventral tegmental area.

It is found in the nucleus. Its subcellular location is the cytoplasm. Transcriptional regulator involved in different processes such as glucose metabolism, aerobic glycolysis and autophagy. Recognizes and binds the forkhead DNA sequence motif (5'-GTAAACA-3') and can both act as a transcription activator or repressor, depending on the context. Together with FOXK1, acts as a key regulator of metabolic reprogramming towards aerobic glycolysis, a process in which glucose is converted to lactate in the presence of oxygen. Acts by promoting expression of enzymes for glycolysis (such as hexokinase-2 (HK2), phosphofructokinase, pyruvate kinase (PKLR) and lactate dehydrogenase), while suppressing further oxidation of pyruvate in the mitochondria by up-regulating pyruvate dehydrogenase kinases PDK1 and PDK4. Probably plays a role in gluconeogenesis during overnight fasting, when lactate from white adipose tissue and muscle is the main substrate. Together with FOXK1, acts as a negative regulator of autophagy in skeletal muscle: in response to starvation, enters the nucleus, binds the promoters of autophagy genes and represses their expression, preventing proteolysis of skeletal muscle proteins. In addition to the 5'-GTAAACA-3' DNA motif, also binds the 5'-TGANTCA-3' palindromic DNA motif, and co-associates with JUN/AP-1 to activate transcription. Also able to bind to a minimal DNA heteroduplex containing a G/T-mismatch with 5'-TRT[G/T]NB-3' sequence. Binds to NFAT-like motifs (purine-rich) in the IL2 promoter. Positively regulates WNT/beta-catenin signaling by translocating DVL proteins into the nucleus. Accessory component of the polycomb repressive deubiquitinase (PR-DUB) complex; recruits the PR-DUB complex to specific FOXK2-bound genes. This is Forkhead box protein K2 from Mus musculus (Mouse).